A 320-amino-acid polypeptide reads, in one-letter code: MRSAQVYRWQIPMDAGVVLRDRRLKTRDGLYVCLREGEREGWGEISPLPGFSQETWEEAQSVLLAWVNNWLAGDCELPQMPSVAFGVSCALAELTDTLPQAANYRAAPLCNGDPDDLILKLADMPGEKVAKVKVGLYEAVRDGMVVNLLLEAIPDLHLRLDANRAWTPLKGQQFAKYVNPDYRDRIAFLEEPCKTRDDSRAFARETGIAIAWDESLREPDFAFVAEEGVRAVVIKPTLTGSLEKVREQVQAAHALGLTAVISSSIESSLGLTQLARIAAWLTPDTIPGLDTLDLMQAQQVRRWPGSTLPVVEVDALERLL.

The active-site Proton donor is the Lys-133. Residues Asp-161, Glu-190, and Asp-213 each coordinate Mg(2+). Lys-235 serves as the catalytic Proton acceptor.

Belongs to the mandelate racemase/muconate lactonizing enzyme family. MenC type 1 subfamily. A divalent metal cation is required as a cofactor.

It catalyses the reaction (1R,6R)-6-hydroxy-2-succinyl-cyclohexa-2,4-diene-1-carboxylate = 2-succinylbenzoate + H2O. The protein operates within quinol/quinone metabolism; 1,4-dihydroxy-2-naphthoate biosynthesis; 1,4-dihydroxy-2-naphthoate from chorismate: step 4/7. It functions in the pathway quinol/quinone metabolism; menaquinone biosynthesis. Functionally, converts 2-succinyl-6-hydroxy-2,4-cyclohexadiene-1-carboxylate (SHCHC) to 2-succinylbenzoate (OSB). The sequence is that of o-succinylbenzoate synthase from Escherichia coli (strain K12 / MC4100 / BW2952).